The following is a 358-amino-acid chain: Prostaglandin E2 receptor EP2 subtype (358 aa).

The Extracellular segment spans residues 1 to 23 (MGNASNDSQSEDCETRQWLPPGE). N-linked (GlcNAc...) asparagine glycosylation is found at asparagine 3 and asparagine 6. A helical membrane pass occupies residues 24–47 (SPAISSVMFSAGVLGNLIALALLA). Over 48 to 65 (RRWRGDVGCSAGRRSSLS) the chain is Cytoplasmic. A helical membrane pass occupies residues 66–91 (LFHVLVTELVFTDLLGTCLISPVVLA). Residues 92-111 (SYARNQTLVALAPESRACTY) are Extracellular-facing. An N-linked (GlcNAc...) asparagine glycan is attached at asparagine 96. A disulfide bridge links cysteine 109 with cysteine 187. A helical transmembrane segment spans residues 112-132 (FAFAMTFFSLATMLMLFAMAL). The Cytoplasmic portion of the chain corresponds to 133–151 (ERYLSIGHPYFYQRRVSRS). The chain crosses the membrane as a helical span at residues 152–176 (GGLAVLPVIYAVSLLFCSLPLLDYG). The Extracellular portion of the chain corresponds to 177 to 198 (QYVQYCPGTWCFIRHGRTAYLQ). A helical membrane pass occupies residues 199–223 (LYATLLLLLIVSVLACNFSVILNLI). At 224-262 (RMHRRSRRSRCGPSLGSGRGGPGARRRGERVSMAEETDH) the chain is on the cytoplasmic side. The segment at 231–253 (RSRCGPSLGSGRGGPGARRRGER) is disordered. A helical membrane pass occupies residues 263–286 (LILLAIMTITFAVCSLPFTIFAYM). An N-linked (GlcNAc...) asparagine glycan is attached at asparagine 287. Topologically, residues 287 to 299 (NETSSRKEKWDLQ) are extracellular. Residues 300-323 (ALRFLSINSIIDPWVFAILRPPVL) traverse the membrane as a helical segment. The Cytoplasmic portion of the chain corresponds to 324 to 358 (RLMRSVLCCRISLRTQDATQTSCSTQSDASKQADL).

This sequence belongs to the G-protein coupled receptor 1 family. Placenta and lung.

Its subcellular location is the cell membrane. Functionally, receptor for prostaglandin E2 (PGE2). The activity of this receptor is mediated by G(s) proteins that stimulate adenylate cyclase. The subsequent raise in intracellular cAMP is responsible for the relaxing effect of this receptor on smooth muscle. The protein is Prostaglandin E2 receptor EP2 subtype (PTGER2) of Homo sapiens (Human).